Consider the following 436-residue polypeptide: MRLARLLRGAALAGPGPGLRAAGFSRSFSSDSGSSPASERGVPGQVDFYARFSPSPLSMKQFLDFGSVNACEKTSFMFLRQELPVRLANIMKEISLLPDNLLRTPSVQLVQSWYIQSLQELLDFKDKSAEDAKAIYDFTDTVIRIRNRHNDVIPTMAQGVIEYKESFGVDPVTSQNVQYFLDRFYMSRISIRMLLNQHSLLFGGKGKGSPSHRKHIGSINPNCNVLEVIKDGYENARRLCDLYYINSPELELEELNAKSPGQPIQVVYVPSHLYHMVFELFKNAMRATMEHHANRGVYPPIQVHVTLGNEDLTVKMSDRGGGVPLRKIDRLFNYMYSTAPRPRVETSRAVPLAGFGYGLPISRLYAQYFQGDLKLYSLEGYGTDAVIYIKALSTDSIERLPVYNKAAWKHYNTNHEADDWCVPSREPKDMTTFRSA.

Residues 1 to 28 (MRLARLLRGAALAGPGPGLRAAGFSRSF) constitute a mitochondrion transit peptide. Tyrosine 136 carries the phosphotyrosine; by FGFR1 modification. Positions 163 to 393 (YKESFGVDPV…DAVIYIKALS (231 aa)) constitute a Histidine kinase domain. Phosphotyrosine; by FGFR1, ABL1, FLT3 and JAK2 is present on tyrosine 243. Position 244 is a phosphotyrosine; by FGFR1 (tyrosine 244). ATP-binding positions include 279 to 286 (ELFKNAMR), aspartate 318, 337 to 338 (ST), and 354 to 359 (GFGYGL). A Phosphothreonine modification is found at threonine 338. Lysine 405 is modified (N6-succinyllysine).

It belongs to the PDK/BCKDK protein kinase family. In terms of assembly, homodimer, and heterodimer with PDK2. Interacts with the pyruvate dehydrogenase complex subunit DLAT, and is part of the multimeric pyruvate dehydrogenase complex that contains multiple copies of pyruvate dehydrogenase (E1), dihydrolipoamide acetyltransferase (DLAT, E2) and lipoamide dehydrogenase (DLD, E3). Interacts with phosphoglycerate kinase PGK1; the interaction is direct, occurs under hypoxic conditions and leads to PDK1-mediated inhibition of pyruvate dehydrogenase complex activity. Phosphorylated by constitutively activated ABL1, FGFR1, FLT3 and JAK2 (in vitro), and this may also occur in cancer cells that express constitutively activated ABL1, FGFR1, FLT3 and JAK2. Phosphorylation at Tyr-243 and Tyr-244 strongly increases kinase activity, while phosphorylation at Tyr-136 has a lesser effect. Phosphorylated under hypoxic conditions at Thr-338 by phosphoglycerate kinase PGK1 which has an activating effect. As to expression, expressed predominantly in the heart. Detected at lower levels in liver, skeletal muscle and pancreas.

It is found in the mitochondrion matrix. The catalysed reaction is L-seryl-[pyruvate dehydrogenase E1 alpha subunit] + ATP = O-phospho-L-seryl-[pyruvate dehydrogenase E1 alpha subunit] + ADP + H(+). Its activity is regulated as follows. Activity is enhanced by binding to the pyruvate dehydrogenase subunit DLAT. Inhibited by AZD7545; this compound interferes with DLAT binding and thereby inhibits kinase activity. Inhibited by dichloroacetate and radicicol. Activated under hypoxic conditions by phosphoglycerate kinase PGK1-mediated phosphorylation at Thr-338. In terms of biological role, kinase that plays a key role in regulation of glucose and fatty acid metabolism and homeostasis via phosphorylation of the pyruvate dehydrogenase subunits PDHA1 and PDHA2. This inhibits pyruvate dehydrogenase activity, and thereby regulates metabolite flux through the tricarboxylic acid cycle, down-regulates aerobic respiration and inhibits the formation of acetyl-coenzyme A from pyruvate. Plays an important role in cellular responses to hypoxia and is important for cell proliferation under hypoxia. The sequence is that of [Pyruvate dehydrogenase (acetyl-transferring)] kinase isozyme 1, mitochondrial (PDK1) from Homo sapiens (Human).